Consider the following 117-residue polypeptide: Ribosomal silencing factor RsfS (117 aa).

It belongs to the Iojap/RsfS family. Interacts with ribosomal protein uL14 (rplN).

Its subcellular location is the cytoplasm. Functionally, functions as a ribosomal silencing factor. Interacts with ribosomal protein uL14 (rplN), blocking formation of intersubunit bridge B8. Prevents association of the 30S and 50S ribosomal subunits and the formation of functional ribosomes, thus repressing translation. The protein is Ribosomal silencing factor RsfS of Halalkalibacterium halodurans (strain ATCC BAA-125 / DSM 18197 / FERM 7344 / JCM 9153 / C-125) (Bacillus halodurans).